The sequence spans 148 residues: Large ribosomal subunit protein bL9 (148 aa).

The protein belongs to the bacterial ribosomal protein bL9 family.

Its function is as follows. Binds to the 23S rRNA. The sequence is that of Large ribosomal subunit protein bL9 from Bacillus cytotoxicus (strain DSM 22905 / CIP 110041 / 391-98 / NVH 391-98).